We begin with the raw amino-acid sequence, 362 residues long: Glutamate 5-kinase (362 aa).

Lysine 3 provides a ligand contact to ATP. Residues serine 43, aspartate 128, and asparagine 140 each contribute to the substrate site. ATP is bound by residues 160–161 and 202–208; these read TD and TGGMRTK. The 82-residue stretch at 267-348 folds into the PUA domain; it reads AGAILIDDGA…REIENVLGYS (82 aa).

It belongs to the glutamate 5-kinase family.

Its subcellular location is the cytoplasm. It carries out the reaction L-glutamate + ATP = L-glutamyl 5-phosphate + ADP. The protein operates within amino-acid biosynthesis; L-proline biosynthesis; L-glutamate 5-semialdehyde from L-glutamate: step 1/2. Its function is as follows. Catalyzes the transfer of a phosphate group to glutamate to form L-glutamate 5-phosphate. The protein is Glutamate 5-kinase of Xanthomonas euvesicatoria pv. vesicatoria (strain 85-10) (Xanthomonas campestris pv. vesicatoria).